The primary structure comprises 100 residues: Elicitin Vex2 (100 aa).

3 disulfide bridges follow: Cys-3–Cys-71, Cys-27–Cys-56, and Cys-51–Cys-95.

Belongs to the elicitin family.

It localises to the secreted. Induces local and distal defense responses (incompatible hypersensitive reaction) in plants from the solanaceae and cruciferae families. Elicits leaf necrosis and causes the accumulation of pathogenesis-related proteins. Might interact with the lipidic molecules of the plasma membrane. This Phytopythium vexans (Damping-off fungus) protein is Elicitin Vex2.